A 238-amino-acid polypeptide reads, in one-letter code: MERKKAVVLLSGGLDSSTVLAYAISLGYEVHAISFDYGQRHSREMNSSEELAKYYGVDRKIVHVDLRSIGKSALTDDIEVPSRDLESIPEEIPVTYVPARNTIFLSIAAAYAESIGSTDIFIGANAIDYSGYPDCRPEYFNAMEKALTLGTEIGLRKGMHINVPLQYLTKADIIRMGLKLGVPYEKTWSCYKGGEKACGECDSCLLRLKGFMEAGSEDPLEYEKYPTFYKDYIEKRKK.

Position 10-20 (10-20 (LSGGLDSSTVL)) interacts with ATP. Residues Cys190, Cys198, Cys201, and Cys204 each coordinate Zn(2+).

The protein belongs to the QueC family. Zn(2+) serves as cofactor.

It catalyses the reaction 7-carboxy-7-deazaguanine + NH4(+) + ATP = 7-cyano-7-deazaguanine + ADP + phosphate + H2O + H(+). It participates in purine metabolism; 7-cyano-7-deazaguanine biosynthesis. Catalyzes the ATP-dependent conversion of 7-carboxy-7-deazaguanine (CDG) to 7-cyano-7-deazaguanine (preQ(0)). The chain is 7-cyano-7-deazaguanine synthase from Thermoplasma acidophilum (strain ATCC 25905 / DSM 1728 / JCM 9062 / NBRC 15155 / AMRC-C165).